Here is a 355-residue protein sequence, read N- to C-terminus: Capsid protein VP1/VP2 (355 aa).

A compositionally biased stretch (basic and acidic residues) spans Met1–Asp21. Residues Met1–Gly41 are disordered.

Belongs to the parvoviridae capsid protein family.

Its subcellular location is the virion. Capsid protein self-assembles to form an icosahedral capsid with a T=1 symmetry, about 22 nm in diameter, and consisting of 60 copies of size variants of the capsid proteins, which differ in the N-terminushe capsid encapsulates the genomic ssDNA. Capsid proteins are responsible for the attachment to host cell receptors. This attachment induces virion internalization predominantly through clathrin-dependent endocytosis. In Aedes albopictus densovirus (isolate Boublik/1994) (AalDNV), this protein is Capsid protein VP1/VP2 (VP).